Consider the following 326-residue polypeptide: Serine hydrolase-like protein (326 aa).

The AB hydrolase-1 domain occupies 44–155 (PVLCLHGWAD…FLPTEVTDMF (112 aa)). Serine 118 is a catalytic residue.

The protein belongs to the AB hydrolase superfamily.

In terms of biological role, probable serine hydrolase. The sequence is that of Serine hydrolase-like protein (serhl) from Danio rerio (Zebrafish).